Consider the following 253-residue polypeptide: Ribonuclease HII (253 aa).

One can recognise an RNase H type-2 domain in the interval 70 to 253 (NLIAGIDEVG…KSFEPIKSML (184 aa)). D76, E77, and D168 together coordinate a divalent metal cation.

It belongs to the RNase HII family. It depends on Mn(2+) as a cofactor. Mg(2+) is required as a cofactor.

Its subcellular location is the cytoplasm. It carries out the reaction Endonucleolytic cleavage to 5'-phosphomonoester.. Endonuclease that specifically degrades the RNA of RNA-DNA hybrids. This chain is Ribonuclease HII, found in Streptococcus agalactiae serotype III (strain NEM316).